A 308-amino-acid polypeptide reads, in one-letter code: Protease HtpX homolog (308 aa).

The next 2 helical transmembrane spans lie at 16–36 and 39–59; these read LLSLLVGLGIAALASLIIYAV and YLFGIYSIGIIFGVFVLVLMM. Position 149 (His149) interacts with Zn(2+). Residue Glu150 is part of the active site. His153 contributes to the Zn(2+) binding site. 2 helical membrane passes run 161 to 181 and 192 to 212; these read VIMAIGLIPTLIFYFAYTTLF and IILALVLMVVSFLFNIMVLSV. Residue Glu217 participates in Zn(2+) binding.

It belongs to the peptidase M48B family. Zn(2+) is required as a cofactor.

Its subcellular location is the cell membrane. In Thermoplasma volcanium (strain ATCC 51530 / DSM 4299 / JCM 9571 / NBRC 15438 / GSS1), this protein is Protease HtpX homolog.